The sequence spans 144 residues: MRLNSLRPAAGSRPDANRVGRGAGTGNGKTAGRGHKGQHSRSGGFTKVGFEGGQMPLQRRVPKVGFRSRKALTRAEVRLSELNKVEGDTVDLLTLKQAGIINRGVRTAKVIASGKVERAVTVQGLAVTKGAREAIEAAGGKVEA.

The interval 1 to 60 (MRLNSLRPAAGSRPDANRVGRGAGTGNGKTAGRGHKGQHSRSGGFTKVGFEGGQMPLQRR) is disordered. Gly residues predominate over residues 21–31 (RGAGTGNGKTA).

It belongs to the universal ribosomal protein uL15 family. In terms of assembly, part of the 50S ribosomal subunit.

Functionally, binds to the 23S rRNA. This chain is Large ribosomal subunit protein uL15, found in Alkalilimnicola ehrlichii (strain ATCC BAA-1101 / DSM 17681 / MLHE-1).